A 489-amino-acid chain; its full sequence is Rhamnulokinase (489 aa).

13 to 17 provides a ligand contact to ATP; that stretch reads ASSGR. Cys68 and Cys222 form a disulfide bridge. Substrate-binding positions include Gly83 and 236–238; that span reads HDT. Residue Asp237 is the Proton acceptor of the active site. Thr259 provides a ligand contact to ATP. Asn296 is a substrate binding site. Gln304 serves as a coordination point for ATP. Residues Cys353 and Cys370 are joined by a disulfide bond. Gly402 contributes to the ATP binding site. Cys413 and Cys417 are disulfide-bonded.

Belongs to the rhamnulokinase family. As to quaternary structure, monomer. The cofactor is Mg(2+).

The catalysed reaction is L-rhamnulose + ATP = L-rhamnulose 1-phosphate + ADP + H(+). It functions in the pathway carbohydrate degradation; L-rhamnose degradation; glycerone phosphate from L-rhamnose: step 2/3. Involved in the catabolism of L-rhamnose (6-deoxy-L-mannose). Catalyzes the transfer of the gamma-phosphate group from ATP to the 1-hydroxyl group of L-rhamnulose to yield L-rhamnulose 1-phosphate. This Escherichia coli O139:H28 (strain E24377A / ETEC) protein is Rhamnulokinase.